The following is a 434-amino-acid chain: Nicotinate phosphoribosyltransferase (434 aa).

The residue at position 242 (His-242) is a Phosphohistidine; by autocatalysis.

This sequence belongs to the NAPRTase family. Post-translationally, transiently phosphorylated on a His residue during the reaction cycle. Phosphorylation strongly increases the affinity for substrates and increases the rate of nicotinate D-ribonucleotide production. Dephosphorylation regenerates the low-affinity form of the enzyme, leading to product release.

The enzyme catalyses nicotinate + 5-phospho-alpha-D-ribose 1-diphosphate + ATP + H2O = nicotinate beta-D-ribonucleotide + ADP + phosphate + diphosphate. The protein operates within cofactor biosynthesis; NAD(+) biosynthesis; nicotinate D-ribonucleotide from nicotinate: step 1/1. Catalyzes the synthesis of beta-nicotinate D-ribonucleotide from nicotinate and 5-phospho-D-ribose 1-phosphate at the expense of ATP. The chain is Nicotinate phosphoribosyltransferase from Rhizobium etli (strain CIAT 652).